Consider the following 143-residue polypeptide: Transcriptional regulator MraZ (143 aa).

SpoVT-AbrB domains follow at residues 5–47 (EYEH…PMPV) and 76–119 (ASDL…SAER).

This sequence belongs to the MraZ family. As to quaternary structure, forms oligomers.

The protein localises to the cytoplasm. Its subcellular location is the nucleoid. This is Transcriptional regulator MraZ from Herpetosiphon aurantiacus (strain ATCC 23779 / DSM 785 / 114-95).